Consider the following 1235-residue polypeptide: DNA polymerase catalytic subunit (1235 aa).

Disordered regions lie at residues 640–693 and 1098–1134; these read QGRF…AGRH and AAAPGDEPAPPAALPSPAKRPRETPSHADPPGGASKP. Basic and acidic residues predominate over residues 650-661; that stretch reads APKRPAAAREDE. Positions 662–675 are enriched in acidic residues; that stretch reads ERPEEEGEDEDERE. Residues 676–691 are compositionally biased toward basic and acidic residues; the sequence is EGGGEREPEGARETAG.

This sequence belongs to the DNA polymerase type-B family. Forms a complex with the ssDNA-binding protein UL29, the DNA polymerase processivity factor, and the alkaline exonuclease. Interacts with the putative helicase-primase complex subunit UL8; this interaction may coordinate leading and lagging strand DNA synthesis at the replication fork.

It is found in the host nucleus. The catalysed reaction is DNA(n) + a 2'-deoxyribonucleoside 5'-triphosphate = DNA(n+1) + diphosphate. It carries out the reaction Endonucleolytic cleavage to 5'-phosphomonoester.. In terms of biological role, replicates viral genomic DNA. The replication complex is composed of six viral proteins: the DNA polymerase, processivity factor, primase, primase-associated factor, helicase, and ssDNA-binding protein. Additionally, the polymerase contains an intrinsic ribonuclease H (RNase H) activity that specifically degrades RNA/DNA heteroduplexes or duplex DNA substrates in the 5' to 3' direction. Therefore, it can catalyze the excision of the RNA primers that initiate the synthesis of Okazaki fragments at a replication fork during viral DNA replication. The chain is DNA polymerase catalytic subunit from Human herpesvirus 1 (strain KOS) (HHV-1).